The primary structure comprises 148 residues: NADH-ubiquinone oxidoreductase chain 3 (148 aa).

The next 3 helical transmembrane spans lie at 19–39, 70–90, and 99–119; these read FYMI…YIIT, FILI…ILPY, and IYGL…FIIE.

It belongs to the complex I subunit 3 family.

Its subcellular location is the mitochondrion membrane. The catalysed reaction is a ubiquinone + NADH + 5 H(+)(in) = a ubiquinol + NAD(+) + 4 H(+)(out). In terms of biological role, core subunit of the mitochondrial membrane respiratory chain NADH dehydrogenase (Complex I) that is believed to belong to the minimal assembly required for catalysis. Complex I functions in the transfer of electrons from NADH to the respiratory chain. The immediate electron acceptor for the enzyme is believed to be ubiquinone. The polypeptide is NADH-ubiquinone oxidoreductase chain 3 (ND3) (Wickerhamomyces canadensis (Yeast)).